The primary structure comprises 396 residues: Glyceraldehyde-3-phosphate dehydrogenase GAPA1, chloroplastic (396 aa).

A chloroplast-targeting transit peptide spans 1-60 (MASVTFSVPKGFTEFSGLRSSSASLPFGKKLSSDEFVSIVSFQTSAMGSSGGYRKGVTEA). NADP(+) is bound by residues 71-72 (RI), Asp95, and Arg140. D-glyceraldehyde 3-phosphate-binding positions include 212–214 (SCT), Thr243, Arg258, 271–272 (TG), and Arg294. Residue Cys213 is the Nucleophile of the active site. Asn376 serves as a coordination point for NADP(+).

The protein belongs to the glyceraldehyde-3-phosphate dehydrogenase family. In terms of assembly, tetramer of either four A chains (GAPDH 2) or two A and two B chains (GAPDH 1). As to expression, expressed in leaves and stems.

It is found in the plastid. The protein localises to the chloroplast membrane. The protein resides in the chloroplast stroma. The catalysed reaction is D-glyceraldehyde 3-phosphate + phosphate + NADP(+) = (2R)-3-phospho-glyceroyl phosphate + NADPH + H(+). It participates in carbohydrate biosynthesis; Calvin cycle. Functionally, involved in the photosynthetic reductive pentose phosphate pathway (Calvin-Benson cycle). Catalyzes the reduction of 1,3-diphosphoglycerate by NADPH. The protein is Glyceraldehyde-3-phosphate dehydrogenase GAPA1, chloroplastic (GAPA1) of Arabidopsis thaliana (Mouse-ear cress).